We begin with the raw amino-acid sequence, 130 residues long: Small ribosomal subunit protein uS11 (130 aa).

Belongs to the universal ribosomal protein uS11 family. As to quaternary structure, part of the 30S ribosomal subunit. Interacts with proteins S7 and S18. Binds to IF-3.

In terms of biological role, located on the platform of the 30S subunit, it bridges several disparate RNA helices of the 16S rRNA. Forms part of the Shine-Dalgarno cleft in the 70S ribosome. The chain is Small ribosomal subunit protein uS11 from Gluconobacter oxydans (strain 621H) (Gluconobacter suboxydans).